A 2450-amino-acid chain; its full sequence is Tetratricopeptide repeat protein 28 (2450 aa).

An N-acetylmethionine modification is found at Met1. The tract at residues 1–36 is disordered; that stretch reads MEQPPPLAPEPASARSRRRREPESPPAPIPLFGART. At Ser24 the chain carries Phosphoserine. TPR repeat units lie at residues 52–85, 87–119, 120–153, 190–223, 228–261, 268–301, 308–341, 348–381, 388–421, 428–461, 468–501, 508–541, 548–581, 588–621, 628–661, 668–701, 708–741, 748–781, 788–821, 828–861, 871–904, 911–944, 951–984, 991–1024, 1031–1064, 1071–1104, 1111–1144, and 1163–1196; these read FVEK…DPQN, ILYS…NPKW, PKAY…DPKS, FVVV…GTCS, GSVF…AKTL, CRAH…AMKL, SSAL…AKQS, AREL…AKDL, ARAY…AQEL, MRAY…AEDL, GRAS…AQEL, GRAY…SMEV, ASTH…AREL, ARAL…APDL, GKVC…AKDL, AKAY…AQSL, FRAL…SHHV, ASAY…YQEL, CRAH…GRKL, AQVY…LQQL, GRAY…AQSL, AKAY…AHEL, AQAY…ARDM, SDAA…AEET, GRAY…AAQM, TVSY…AEQL, AKIR…FETI, and TSSY…AFAD. Residues 1362-1381 form a disordered region; the sequence is SGTVSPSKDGTSSLPRRQNS. A phosphoserine mark is found at Ser1584 and Ser2098. The interval 2001–2364 is disordered; the sequence is KPEGGLEGGG…GTLTSKRDVL (364 aa). Polar residues predominate over residues 2090-2116; the sequence is SVSSKGSVSTPNSPVKMTLIPSPNSPF. Residues 2124–2140 are compositionally biased toward low complexity; that stretch reads SSDTGESDQSSTETDST. Residues 2143-2153 are compositionally biased toward basic and acidic residues; that stretch reads SQEESTPKLDP. A compositionally biased stretch (polar residues) spans 2191–2206; sequence APSSTTVFRASETSAF. Ser2216 is modified (phosphoserine). Over residues 2229 to 2245 the composition is skewed to polar residues; that stretch reads ARSSSLPKVSSPATSEV. 2 stretches are compositionally biased toward low complexity: residues 2252-2262 and 2296-2320; these read SPPGSSHPSPG and SPAC…SPAD. Phosphoserine occurs at positions 2365 and 2370.

As to quaternary structure, interacts with AURKB. In terms of tissue distribution, expressed in embryos at all stages examined. In adult tissues, detected in heart and at low levels in kidney and testis.

It is found in the cytoplasm. Its subcellular location is the cytoskeleton. It localises to the microtubule organizing center. The protein resides in the centrosome. The protein localises to the spindle. It is found in the spindle pole. Its subcellular location is the midbody. Functionally, during mitosis, may be involved in the condensation of spindle midzone microtubules, leading to the formation of midbody. In terms of biological role, essential for the formation and integrity of the midbody. Max play a critical role in the progress of mitosis and cytokinesis during cell cycle. This is Tetratricopeptide repeat protein 28 (Ttc28) from Mus musculus (Mouse).